Consider the following 553-residue polypeptide: MATVTLNYPDLVKLIGIDLSLDKVREVMFELGSETEDIQGDEVTFEVTSDRADLLSEEGIARMLRAYYSIETGFRIPKLQPSGYKLIVNREVEPVRPYVTGAIVRNVQFTDESIKSLMHLQEKLHGTFGRKRKKGAVGVHDLSKIKGREIHYRAVPGDSVKFVPLQSDELMTLSDVLARHPKGIDYRYVLEGKNLMPIITDDEGIFSFPPIINSKRTEVTLNTHDLLIELTGEDLRTIDYMLNIVLYSLDLRGASIYSIDVVYPDETLHRPDFNVRNIDIEVDYVNRVLGLELTAPDIKALLERMGFKVAETGSDYLIVEVPPYRADILHKRDVVDDVGRAFGYNNITPSYPNTPSVGKLTEATKLGDAIRNTMIGLGCQDTFNFILIGKDEVFGKMNLPDDGTAVEISNPYAEQYNIVRTSLIPSLMIVLSNNLHRDYPQNIFEVGTVAHLDSAENTGVKEIDHVACTLCYAKAGFNEIKVKLQSLCANFGKLDELKTVAAEHPSFIPGRCAEVRIGDKKVGIIGELSPVVLKSWGIEMPVAAFEMEIAALK.

Residues 273–349 (FNVRNIDIEV…RAFGYNNITP (77 aa)) form the B5 domain. Mg(2+) is bound by residues aspartate 327, aspartate 333, aspartate 336, and aspartate 337.

This sequence belongs to the phenylalanyl-tRNA synthetase beta subunit family. Type 2 subfamily. As to quaternary structure, tetramer of two alpha and two beta subunits. The cofactor is Mg(2+).

It is found in the cytoplasm. It carries out the reaction tRNA(Phe) + L-phenylalanine + ATP = L-phenylalanyl-tRNA(Phe) + AMP + diphosphate + H(+). The protein is Phenylalanine--tRNA ligase beta subunit of Methanocella arvoryzae (strain DSM 22066 / NBRC 105507 / MRE50).